Reading from the N-terminus, the 236-residue chain is EEF1A lysine methyltransferase 2 (236 aa).

Residues 1 to 11 (MSSGADGGGGA) are compositionally biased toward gly residues. The segment at 1–31 (MSSGADGGGGAAVAARSDKGSPGEDGFVPSA) is disordered. Ser2 carries the post-translational modification N-acetylserine. Ser21 carries the phosphoserine modification.

It belongs to the class I-like SAM-binding methyltransferase superfamily. EFM4 family.

Its subcellular location is the cytoplasm. It is found in the nucleus. It carries out the reaction L-lysyl-[protein] + 3 S-adenosyl-L-methionine = N(6),N(6),N(6)-trimethyl-L-lysyl-[protein] + 3 S-adenosyl-L-homocysteine + 3 H(+). Protein-lysine methyltransferase that selectively catalyzes the trimethylation of EEF1A at 'Lys-318'. The chain is EEF1A lysine methyltransferase 2 from Homo sapiens (Human).